We begin with the raw amino-acid sequence, 794 residues long: Protein transport protein SEC23 G (794 aa).

Zn(2+)-binding residues include Cys-56, Cys-59, Cys-78, and Cys-81. Residues 56 to 81 (CSRCGAVLNPYARVDYQSRIWSCPFC) form a zinc finger-like region.

This sequence belongs to the SEC23/SEC24 family. SEC23 subfamily. In terms of assembly, component of the coat protein complex II (COPII), composed of at least five proteins: the Sec23/24 complex, the Sec13/31 complex and Sar1. Interacts with SEC24A.

It localises to the cytoplasmic vesicle. The protein localises to the COPII-coated vesicle membrane. Its subcellular location is the endoplasmic reticulum membrane. It is found in the membrane. Component of the coat protein complex II (COPII) which promotes the formation of transport vesicles from the endoplasmic reticulum (ER). The coat has two main functions, the physical deformation of the endoplasmic reticulum membrane into vesicles and the selection of cargo molecules. The protein is Protein transport protein SEC23 G of Arabidopsis thaliana (Mouse-ear cress).